A 390-amino-acid polypeptide reads, in one-letter code: Probable tRNA sulfurtransferase (390 aa).

Residues 60 to 162 (KQIIDDLKEV…YDCAIVYGHK (103 aa)) form the THUMP domain. Residues 180-181 (LL), 205-206 (TF), arginine 264, glycine 286, and glutamine 295 contribute to the ATP site.

It belongs to the ThiI family.

The protein localises to the cytoplasm. It carries out the reaction [ThiI sulfur-carrier protein]-S-sulfanyl-L-cysteine + a uridine in tRNA + 2 reduced [2Fe-2S]-[ferredoxin] + ATP + H(+) = [ThiI sulfur-carrier protein]-L-cysteine + a 4-thiouridine in tRNA + 2 oxidized [2Fe-2S]-[ferredoxin] + AMP + diphosphate. The catalysed reaction is [ThiS sulfur-carrier protein]-C-terminal Gly-Gly-AMP + S-sulfanyl-L-cysteinyl-[cysteine desulfurase] + AH2 = [ThiS sulfur-carrier protein]-C-terminal-Gly-aminoethanethioate + L-cysteinyl-[cysteine desulfurase] + A + AMP + 2 H(+). It functions in the pathway cofactor biosynthesis; thiamine diphosphate biosynthesis. Functionally, catalyzes the ATP-dependent transfer of a sulfur to tRNA to produce 4-thiouridine in position 8 of tRNAs, which functions as a near-UV photosensor. Also catalyzes the transfer of sulfur to the sulfur carrier protein ThiS, forming ThiS-thiocarboxylate. This is a step in the synthesis of thiazole, in the thiamine biosynthesis pathway. The sulfur is donated as persulfide by IscS. This chain is Probable tRNA sulfurtransferase, found in Ureaplasma parvum serovar 3 (strain ATCC 27815 / 27 / NCTC 11736).